A 606-amino-acid polypeptide reads, in one-letter code: NADH-ubiquinone oxidoreductase chain 5 (606 aa).

Methionine 1 bears the N-formylmethionine mark. Helical transmembrane passes span 4–24 (FSSL…MMSF), 43–63 (AFIT…ELII), 87–107 (MMFI…SMWY), 117–137 (FFKY…ANNL), 140–160 (LFIG…WWYG), 171–191 (AILY…WFLT), 213–233 (LIGL…HPWL), 241–261 (TPVS…FLLI), 273–293 (IQSI…MCAL), 310–330 (LGLM…LHIC), 366–386 (MPFT…MPFL), 413–433 (LIAT…ALLG), 457–477 (LLIG…PTTI), 482–502 (MPYY…ILAL), and 582–602 (GLIK…MILF).

As to quaternary structure, core subunit of respiratory chain NADH dehydrogenase (Complex I) which is composed of 45 different subunits.

It is found in the mitochondrion inner membrane. It catalyses the reaction a ubiquinone + NADH + 5 H(+)(in) = a ubiquinol + NAD(+) + 4 H(+)(out). Functionally, core subunit of the mitochondrial membrane respiratory chain NADH dehydrogenase (Complex I) which catalyzes electron transfer from NADH through the respiratory chain, using ubiquinone as an electron acceptor. Essential for the catalytic activity and assembly of complex I. In Bos taurus (Bovine), this protein is NADH-ubiquinone oxidoreductase chain 5 (MT-ND5).